A 472-amino-acid polypeptide reads, in one-letter code: 3-isopropylmalate dehydratase large subunit (472 aa).

[4Fe-4S] cluster-binding residues include cysteine 352, cysteine 413, and cysteine 416.

Belongs to the aconitase/IPM isomerase family. LeuC type 1 subfamily. In terms of assembly, heterodimer of LeuC and LeuD. It depends on [4Fe-4S] cluster as a cofactor.

The enzyme catalyses (2R,3S)-3-isopropylmalate = (2S)-2-isopropylmalate. It functions in the pathway amino-acid biosynthesis; L-leucine biosynthesis; L-leucine from 3-methyl-2-oxobutanoate: step 2/4. In terms of biological role, catalyzes the isomerization between 2-isopropylmalate and 3-isopropylmalate, via the formation of 2-isopropylmaleate. The protein is 3-isopropylmalate dehydratase large subunit of Laribacter hongkongensis (strain HLHK9).